The chain runs to 169 residues: CKLF-like MARVEL transmembrane domain-containing protein 1 (169 aa).

Residues 17–135 (NLKQPETAAA…DAFVVTTKMR (119 aa)) enclose the MARVEL domain. 4 helical membrane-spanning segments follow: residues 22-42 (ETAA…ITQA), 46-66 (FITI…IYVL), 79-99 (LLDL…AILA), and 110-130 (YVGG…AFVV).

It belongs to the chemokine-like factor family. In terms of tissue distribution, highly expressed in testis.

It localises to the membrane. In Homo sapiens (Human), this protein is CKLF-like MARVEL transmembrane domain-containing protein 1 (CMTM1).